The chain runs to 328 residues: Malate dehydrogenase (328 aa).

Position 11-17 (11-17) interacts with NAD(+); sequence GAAGQIG. Residues R94 and R100 each contribute to the substrate site. NAD(+) is bound by residues N107, Q114, and 131–133; that span reads VGN. The substrate site is built by N133 and R164. H189 acts as the Proton acceptor in catalysis.

Belongs to the LDH/MDH superfamily. MDH type 2 family.

It catalyses the reaction (S)-malate + NAD(+) = oxaloacetate + NADH + H(+). Its function is as follows. Catalyzes the reversible oxidation of malate to oxaloacetate. The chain is Malate dehydrogenase from Stenotrophomonas maltophilia (strain R551-3).